Consider the following 329-residue polypeptide: CDP-diacylglycerol--glycerol-3-phosphate 3-phosphatidyltransferase 1, chloroplastic (329 aa).

A chloroplast-targeting transit peptide spans Met-1–Ala-38. 4 helical membrane-spanning segments follow: residues Pro-150–Leu-170, Val-190–Ala-210, Leu-217–Val-237, and Ile-300–Ile-320.

Belongs to the CDP-alcohol phosphatidyltransferase class-I family. The cofactor is Mn(2+).

It is found in the plastid. The protein resides in the chloroplast membrane. The catalysed reaction is a CDP-1,2-diacyl-sn-glycerol + sn-glycerol 3-phosphate = a 1,2-diacyl-sn-glycero-3-phospho-(1'-sn-glycero-3'-phosphate) + CMP + H(+). Its pathway is phospholipid metabolism; phosphatidylglycerol biosynthesis; phosphatidylglycerol from CDP-diacylglycerol: step 1/2. Functionally, catalyzes the committed step to the synthesis of the acidic phospholipids. Transfers specifically a phosphatidyl group from CDP-diacylglycerol to glycerol-3-phosphate to form phosphatidylglycerophosphate. In Oryza sativa subsp. japonica (Rice), this protein is CDP-diacylglycerol--glycerol-3-phosphate 3-phosphatidyltransferase 1, chloroplastic.